The following is a 142-amino-acid chain: Small heat shock protein IbpB (142 aa).

Residues 26-137 (AGESQSFPPY…AAQRIAISER (112 aa)) enclose the sHSP domain.

Belongs to the small heat shock protein (HSP20) family. Homodimer. Forms homomultimers of about 100-150 subunits at optimal growth temperatures. Conformation changes to oligomers at high temperatures or high ionic concentrations. The decrease in size of the multimers is accompanied by an increase in chaperone activity.

The protein localises to the cytoplasm. In terms of biological role, associates with aggregated proteins, together with IbpA, to stabilize and protect them from irreversible denaturation and extensive proteolysis during heat shock and oxidative stress. Aggregated proteins bound to the IbpAB complex are more efficiently refolded and reactivated by the ATP-dependent chaperone systems ClpB and DnaK/DnaJ/GrpE. Its activity is ATP-independent. This chain is Small heat shock protein IbpB, found in Shigella flexneri serotype 5b (strain 8401).